A 152-amino-acid chain; its full sequence is SsrA-binding protein (152 aa).

It belongs to the SmpB family.

The protein localises to the cytoplasm. In terms of biological role, required for rescue of stalled ribosomes mediated by trans-translation. Binds to transfer-messenger RNA (tmRNA), required for stable association of tmRNA with ribosomes. tmRNA and SmpB together mimic tRNA shape, replacing the anticodon stem-loop with SmpB. tmRNA is encoded by the ssrA gene; the 2 termini fold to resemble tRNA(Ala) and it encodes a 'tag peptide', a short internal open reading frame. During trans-translation Ala-aminoacylated tmRNA acts like a tRNA, entering the A-site of stalled ribosomes, displacing the stalled mRNA. The ribosome then switches to translate the ORF on the tmRNA; the nascent peptide is terminated with the 'tag peptide' encoded by the tmRNA and targeted for degradation. The ribosome is freed to recommence translation, which seems to be the essential function of trans-translation. The polypeptide is SsrA-binding protein (Helicobacter pylori (strain Shi470)).